Here is a 162-residue protein sequence, read N- to C-terminus: Phosphopantetheine adenylyltransferase (162 aa).

T9 lines the substrate pocket. Residues 9 to 10 (TF) and H17 contribute to the ATP site. K41, L77, and R91 together coordinate substrate. Residues 92 to 94 (GLR), E102, and 127 to 133 (RQAIASK) contribute to the ATP site.

Belongs to the bacterial CoaD family. In terms of assembly, homohexamer. It depends on Mg(2+) as a cofactor.

It localises to the cytoplasm. The catalysed reaction is (R)-4'-phosphopantetheine + ATP + H(+) = 3'-dephospho-CoA + diphosphate. Its pathway is cofactor biosynthesis; coenzyme A biosynthesis; CoA from (R)-pantothenate: step 4/5. Reversibly transfers an adenylyl group from ATP to 4'-phosphopantetheine, yielding dephospho-CoA (dPCoA) and pyrophosphate. The sequence is that of Phosphopantetheine adenylyltransferase from Cereibacter sphaeroides (strain ATCC 17025 / ATH 2.4.3) (Rhodobacter sphaeroides).